Consider the following 91-residue polypeptide: DNA-directed RNA polymerase subunit omega (91 aa).

This sequence belongs to the RNA polymerase subunit omega family. In terms of assembly, the RNAP catalytic core consists of 2 alpha, 1 beta, 1 beta' and 1 omega subunit. When a sigma factor is associated with the core the holoenzyme is formed, which can initiate transcription.

The enzyme catalyses RNA(n) + a ribonucleoside 5'-triphosphate = RNA(n+1) + diphosphate. Functionally, promotes RNA polymerase assembly. Latches the N- and C-terminal regions of the beta' subunit thereby facilitating its interaction with the beta and alpha subunits. The protein is DNA-directed RNA polymerase subunit omega of Nocardia farcinica (strain IFM 10152).